Reading from the N-terminus, the 509-residue chain is Photosystem II CP47 reaction center protein (509 aa).

The next 6 helical transmembrane spans lie at 21-36 (SVHI…WAGS), 101-115 (IVFS…IWHW), 140-156 (GIHL…FGAF), 203-218 (IAAG…FHLS), 237-252 (VLSS…AFVV), and 457-472 (SFAL…HGAR).

The protein belongs to the PsbB/PsbC family. PsbB subfamily. As to quaternary structure, PSII is composed of 1 copy each of membrane proteins PsbA, PsbB, PsbC, PsbD, PsbE, PsbF, PsbH, PsbI, PsbJ, PsbK, PsbL, PsbM, PsbT, PsbX, PsbY, PsbZ, Psb30/Ycf12, at least 3 peripheral proteins of the oxygen-evolving complex and a large number of cofactors. It forms dimeric complexes. Requires Binds multiple chlorophylls. PSII binds additional chlorophylls, carotenoids and specific lipids. as cofactor.

It is found in the plastid. It localises to the chloroplast thylakoid membrane. In terms of biological role, one of the components of the core complex of photosystem II (PSII). It binds chlorophyll and helps catalyze the primary light-induced photochemical processes of PSII. PSII is a light-driven water:plastoquinone oxidoreductase, using light energy to abstract electrons from H(2)O, generating O(2) and a proton gradient subsequently used for ATP formation. The chain is Photosystem II CP47 reaction center protein from Cicer arietinum (Chickpea).